A 291-amino-acid chain; its full sequence is GENVEKIGEGTYGVVYKARDRVTNETIALKKIRLEQEDEGVPSTAIREISLLKEMQHRNIVRLQDVVHSDKRLYLVFEYLDLDLKKHMDSSPEFIKDPRQVKMFLYQMLCGIAYCHSHRVLHRDLKPQNLLIDRRTNSLKLADFGLARAFGIPVRTFTHEVVTLWYRAPEILLGSRHYSTPVDVWSVGCIFAEMANRRPLSPGDSEIDELFKIFRILGTPNEDTWPGVTSLPDFKSTFPRWPSKDLATVVPNLEPAGLDLLNSMLCLDPTKRITARSAVEHEYFKDIKFVP.

The Protein kinase domain maps to 1–284 (GENVEKIGEG…ARSAVEHEYF (284 aa)). Residues 7–15 (IGEGTYGVV) and Lys-30 contribute to the ATP site. Thr-11 carries the phosphothreonine modification. At Tyr-12 the chain carries Phosphotyrosine. Catalysis depends on Asp-124, which acts as the Proton acceptor. Thr-158 is modified (phosphothreonine; by CAK).

It belongs to the protein kinase superfamily. CMGC Ser/Thr protein kinase family. CDC2/CDKX subfamily. In terms of tissue distribution, found in most organs including root, young leaf, stem, vegetative meristem and flower bud.

It catalyses the reaction L-seryl-[protein] + ATP = O-phospho-L-seryl-[protein] + ADP + H(+). The enzyme catalyses L-threonyl-[protein] + ATP = O-phospho-L-threonyl-[protein] + ADP + H(+). It carries out the reaction [DNA-directed RNA polymerase] + ATP = phospho-[DNA-directed RNA polymerase] + ADP + H(+). With respect to regulation, phosphorylation at Thr-11 or Tyr-12 inactivates the enzyme, while phosphorylation at Thr-158 activates it. In terms of biological role, plays a key role in the control of the eukaryotic cell cycle. Component of the kinase complex that phosphorylates the repetitive C-terminus of RNA polymerase II. This Medicago sativa (Alfalfa) protein is Cell division control protein 2 homolog 1 (CDC2A).